A 181-amino-acid polypeptide reads, in one-letter code: Probable Brix domain-containing ribosomal biogenesis protein (181 aa).

A Brix domain is found at 5 to 181; that stretch reads CKVIITTSRE…RIKKVVYRHV (177 aa).

Its function is as follows. Probably involved in the biogenesis of the ribosome. This chain is Probable Brix domain-containing ribosomal biogenesis protein, found in Pyrobaculum aerophilum (strain ATCC 51768 / DSM 7523 / JCM 9630 / CIP 104966 / NBRC 100827 / IM2).